The following is a 590-amino-acid chain: Pentatricopeptide repeat-containing protein At1g63070, mitochondrial (590 aa).

The transit peptide at methionine 1 to phenylalanine 34 directs the protein to the mitochondrion. PPR repeat units lie at residues serine 74 to histidine 108, asparagine 109 to proline 143, serine 144 to proline 178, aspartate 179 to proline 213, aspartate 214 to alanine 248, aspartate 249 to proline 283, aspartate 284 to proline 318, aspartate 319 to phenylalanine 353, aspartate 355 to glycine 389, asparagine 390 to proline 424, aspartate 425 to leucine 459, aspartate 460 to proline 494, asparagine 495 to proline 529, and asparagine 530 to glycine 564.

It belongs to the PPR family. P subfamily.

The protein localises to the mitochondrion. This Arabidopsis thaliana (Mouse-ear cress) protein is Pentatricopeptide repeat-containing protein At1g63070, mitochondrial.